The sequence spans 295 residues: Inositol polyphosphate multikinase IPK2 (295 aa).

Residues 1–21 (MASDLRPPEHQVAGHRASADK) are disordered.

This sequence belongs to the inositol phosphokinase (IPK) family.

It carries out the reaction 1D-myo-inositol 1,4,5-trisphosphate + 2 ATP = 1D-myo-inositol 1,3,4,5,6-pentakisphosphate + 2 ADP + 2 H(+). It catalyses the reaction 1D-myo-inositol 1,3,4,6-tetrakisphosphate + ATP = 1D-myo-inositol 1,3,4,5,6-pentakisphosphate + ADP + H(+). Inositol phosphate kinase with a broad substrate specificity. Phosphorylates inositol 1,4,5-trisphosphate (Ins(1,4,5)P3), inositol 1,4,5,6-tetrakisphosphate (Ins(1,4,5,6)P4), inositol 1,3,4,5-tetrakisphosphate (Ins(1,3,4,5)P4), inositol 1,3,4,6-tetrakisphosphate (Ins(1,3,4,6)P4) and inositol 1,2,3,4,6-pentakisphosphate (Ins(1,2,3,4,6)P5) but not inositol 1,4-bisphosphate (Ins(1,4)P2), inositol 1,3,4-trisphosphate (Ins(1,3,4)P3), inositol 1,2,6-trisphosphate (Ins(1,2,6)P3), inositol 3,4,5,6-tetrakisphosphate (Ins(3,4,5,6)P4), inositol 1,3,4,5,6-pentakisphosphate (Ins(1,3,4,5,6)P5), inositol 1,2,4,5,6-pentakisphosphate (Ins(1,2,4,5,6)P5) or inositol hexakisphosphate (InsP6). Regulates pollen and root development probably through the regulation of InsP3-mediated calcium accumulation. This chain is Inositol polyphosphate multikinase IPK2, found in Oryza sativa subsp. indica (Rice).